The following is a 210-amino-acid chain: Somatotropin-1 (210 aa).

The first 22 residues, 1–22 (MARALVLLSVVLVSLLVNQGRA), serve as a signal peptide directing secretion. Residue H38 coordinates Zn(2+). C71 and C183 are joined by a disulfide. Residue E192 coordinates Zn(2+). C200 and C208 are joined by a disulfide.

Belongs to the somatotropin/prolactin family.

It is found in the secreted. Its function is as follows. Growth hormone plays an important role in growth control and is involved in the regulation of several anabolic processes. Implicated as an osmoregulatory substance important for seawater adaptation. The sequence is that of Somatotropin-1 (gh1) from Carassius auratus (Goldfish).